The primary structure comprises 283 residues: Protein boule-like (283 aa).

Residues 1–25 (MQTDSLSPSPNPVSPVPLNNPTSAP) form a disordered region. Residues 33-110 (NRIFVGGIDF…KKLNIGPAIR (78 aa)) enclose the RRM domain. The DAZ domain occupies 160–184 (PSRSVCSSPVMVAQPIYQQPAYHYQ).

It belongs to the RRM DAZ family. Interacts with DAZ1 and DAZL. Testis specific. Not expressed in early embryos, primordial germ cells and spermatogonial cells. First expressed in the cytoplasm of spermatocytes and then persists through meiosis.

The protein localises to the cytoplasm. In terms of biological role, probable RNA-binding protein, which may be required during spermatogenesis. May act by binding to the 3'-UTR of mRNAs and regulating their translation. This is Protein boule-like (BOLL) from Homo sapiens (Human).